A 426-amino-acid polypeptide reads, in one-letter code: DUF724 domain-containing protein 9 (426 aa).

Polar residues-rich tracts occupy residues 164-184 and 213-222; these read ESSL…NANE and PRNQNASVND. Positions 164-248 are disordered; sequence ESSLTQGSGD…REESLCSDAS (85 aa). Positions 223–242 are enriched in basic and acidic residues; that stretch reads STRENENSEDINRKRKREES. The DUF724 domain occupies 256 to 425; sequence LPFEKKLSIW…LQFQTTASAP (170 aa). Positions 370 to 402 form a coiled coil; the sequence is AEKESIKIENERKILELQRLNEEVDKEIAQSKS.

In terms of tissue distribution, expressed in flowers.

The protein localises to the nucleus. Functionally, may be involved in the polar growth of plant cells via transportation of RNAs. In Arabidopsis thaliana (Mouse-ear cress), this protein is DUF724 domain-containing protein 9.